A 334-amino-acid polypeptide reads, in one-letter code: Fructose-1,6-bisphosphatase class 1 (334 aa).

Mg(2+)-binding residues include Glu92, Asp114, Leu116, and Asp117. Substrate-binding positions include 117–120 (DGSS) and Asn209. Glu281 provides a ligand contact to Mg(2+).

Belongs to the FBPase class 1 family. Homotetramer. It depends on Mg(2+) as a cofactor.

Its subcellular location is the cytoplasm. The catalysed reaction is beta-D-fructose 1,6-bisphosphate + H2O = beta-D-fructose 6-phosphate + phosphate. It functions in the pathway carbohydrate biosynthesis; gluconeogenesis. This is Fructose-1,6-bisphosphatase class 1 from Nitrosomonas europaea (strain ATCC 19718 / CIP 103999 / KCTC 2705 / NBRC 14298).